A 351-amino-acid chain; its full sequence is L-threonine 3-dehydrogenase (351 aa).

Position 39 (C39) interacts with Zn(2+). Active-site charge relay system residues include T41 and H44. Zn(2+)-binding residues include H64, E65, C94, C97, C100, and C108. NAD(+) contacts are provided by residues I176, D196, R201, 271–273 (LGI), and 295–296 (IY).

This sequence belongs to the zinc-containing alcohol dehydrogenase family. In terms of assembly, homotetramer. Requires Zn(2+) as cofactor.

The protein localises to the cytoplasm. It catalyses the reaction L-threonine + NAD(+) = (2S)-2-amino-3-oxobutanoate + NADH + H(+). It participates in amino-acid degradation; L-threonine degradation via oxydo-reductase pathway; glycine from L-threonine: step 1/2. Its function is as follows. Catalyzes the NAD(+)-dependent oxidation of L-threonine to 2-amino-3-ketobutyrate. The polypeptide is L-threonine 3-dehydrogenase (Francisella tularensis subsp. mediasiatica (strain FSC147)).